We begin with the raw amino-acid sequence, 233 residues long: Large ribosomal subunit protein uL1 (233 aa).

It belongs to the universal ribosomal protein uL1 family. In terms of assembly, part of the 50S ribosomal subunit.

Binds directly to 23S rRNA. The L1 stalk is quite mobile in the ribosome, and is involved in E site tRNA release. Functionally, protein L1 is also a translational repressor protein, it controls the translation of the L11 operon by binding to its mRNA. The chain is Large ribosomal subunit protein uL1 from Polynucleobacter asymbioticus (strain DSM 18221 / CIP 109841 / QLW-P1DMWA-1) (Polynucleobacter necessarius subsp. asymbioticus).